A 79-amino-acid polypeptide reads, in one-letter code: Small ribosomal subunit protein bS18 (79 aa).

Belongs to the bacterial ribosomal protein bS18 family. In terms of assembly, part of the 30S ribosomal subunit. Forms a tight heterodimer with protein bS6.

Functionally, binds as a heterodimer with protein bS6 to the central domain of the 16S rRNA, where it helps stabilize the platform of the 30S subunit. The chain is Small ribosomal subunit protein bS18 from Nitrobacter winogradskyi (strain ATCC 25391 / DSM 10237 / CIP 104748 / NCIMB 11846 / Nb-255).